A 177-amino-acid polypeptide reads, in one-letter code: ATP synthase subunit delta (177 aa).

The protein belongs to the ATPase delta chain family. In terms of assembly, F-type ATPases have 2 components, F(1) - the catalytic core - and F(0) - the membrane proton channel. F(1) has five subunits: alpha(3), beta(3), gamma(1), delta(1), epsilon(1). F(0) has three main subunits: a(1), b(2) and c(10-14). The alpha and beta chains form an alternating ring which encloses part of the gamma chain. F(1) is attached to F(0) by a central stalk formed by the gamma and epsilon chains, while a peripheral stalk is formed by the delta and b chains.

Its subcellular location is the cell inner membrane. Its function is as follows. F(1)F(0) ATP synthase produces ATP from ADP in the presence of a proton or sodium gradient. F-type ATPases consist of two structural domains, F(1) containing the extramembraneous catalytic core and F(0) containing the membrane proton channel, linked together by a central stalk and a peripheral stalk. During catalysis, ATP synthesis in the catalytic domain of F(1) is coupled via a rotary mechanism of the central stalk subunits to proton translocation. In terms of biological role, this protein is part of the stalk that links CF(0) to CF(1). It either transmits conformational changes from CF(0) to CF(1) or is implicated in proton conduction. In Psychromonas ingrahamii (strain DSM 17664 / CCUG 51855 / 37), this protein is ATP synthase subunit delta.